Consider the following 440-residue polypeptide: COP9 signalosome complex subunit 5 (440 aa).

Residues 71 to 218 (VLISKLSCEK…MGAFRTIESK (148 aa)) form the MPN domain. Zn(2+) is bound by residues histidine 164, histidine 166, and aspartate 177. The JAMM motif motif lies at 164–177 (HSHPGYDCWLSNID). A compositionally biased stretch (polar residues) spans 319–341 (TQRGDSTETSSFGSMFSGDNTSD). Disordered regions lie at residues 319-343 (TQRG…SDVD) and 376-400 (SRST…HDEG).

Belongs to the peptidase M67A family. CSN5 subfamily. In terms of assembly, component of a COP9 signalosome-like (CSN) complex, composed of at least RRI1/CSN5, CSN9, RRI2/CSN10, PCI8/CSN11, CSN12 and CSI1. Within this complex it probably interacts directly with CSN12. Also interacts with RPN5. A divalent metal cation is required as a cofactor.

It is found in the cytoplasm. It localises to the nucleus. Its function is as follows. Catalytic component of the COP9 signalosome (CSN) complex that acts as an regulator of the ubiquitin (Ubl) conjugation pathway by mediating the deneddylation of the cullin subunit of SCF-type E3 ubiquitin-protein ligase complexes. The CSN complex is involved in the regulation of the mating pheromone response. The polypeptide is COP9 signalosome complex subunit 5 (RRI1) (Saccharomyces cerevisiae (strain YJM789) (Baker's yeast)).